The chain runs to 1378 residues: DNA-directed RNA polymerase subunit beta (1378 aa).

This sequence belongs to the RNA polymerase beta chain family. In terms of assembly, the RNAP catalytic core consists of 2 alpha, 1 beta, 1 beta' and 1 omega subunit. When a sigma factor is associated with the core the holoenzyme is formed, which can initiate transcription.

It catalyses the reaction RNA(n) + a ribonucleoside 5'-triphosphate = RNA(n+1) + diphosphate. Its function is as follows. DNA-dependent RNA polymerase catalyzes the transcription of DNA into RNA using the four ribonucleoside triphosphates as substrates. This Campylobacter jejuni (strain RM1221) protein is DNA-directed RNA polymerase subunit beta.